We begin with the raw amino-acid sequence, 243 residues long: Phosphoribosyl isomerase A (243 aa).

Asp10 (proton acceptor) is an active-site residue. Residue Asp129 is the Proton donor of the active site.

This sequence belongs to the HisA/HisF family.

It localises to the cytoplasm. The catalysed reaction is 1-(5-phospho-beta-D-ribosyl)-5-[(5-phospho-beta-D-ribosylamino)methylideneamino]imidazole-4-carboxamide = 5-[(5-phospho-1-deoxy-D-ribulos-1-ylimino)methylamino]-1-(5-phospho-beta-D-ribosyl)imidazole-4-carboxamide. The enzyme catalyses N-(5-phospho-beta-D-ribosyl)anthranilate = 1-(2-carboxyphenylamino)-1-deoxy-D-ribulose 5-phosphate. Its pathway is amino-acid biosynthesis; L-histidine biosynthesis; L-histidine from 5-phospho-alpha-D-ribose 1-diphosphate: step 4/9. It functions in the pathway amino-acid biosynthesis; L-tryptophan biosynthesis; L-tryptophan from chorismate: step 3/5. In terms of biological role, involved in both the histidine and tryptophan biosynthetic pathways. The protein is Phosphoribosyl isomerase A of Mycobacteroides abscessus (strain ATCC 19977 / DSM 44196 / CCUG 20993 / CIP 104536 / JCM 13569 / NCTC 13031 / TMC 1543 / L948) (Mycobacterium abscessus).